Here is a 442-residue protein sequence, read N- to C-terminus: F-box only protein 39 (442 aa).

Residues 16–61 (WAFLPDLCLCRVFWWLGDRDRSRAALVCRKWNQMMYSAELWRYRTI) enclose the F-box domain.

In terms of assembly, directly interacts with SKP1 and CUL1.

Its function is as follows. Substrate-recognition component of the SCF (SKP1-CUL1-F-box protein)-type E3 ubiquitin ligase complex. This is F-box only protein 39 (FBXO39) from Homo sapiens (Human).